A 197-amino-acid chain; its full sequence is dTTP/UTP pyrophosphatase (197 aa).

Residue Asp70 is the Proton acceptor of the active site.

It belongs to the Maf family. YhdE subfamily. In terms of assembly, homodimer. Can also form homotetramers. The cofactor is a divalent metal cation.

The protein localises to the cytoplasm. It carries out the reaction dTTP + H2O = dTMP + diphosphate + H(+). The catalysed reaction is UTP + H2O = UMP + diphosphate + H(+). It catalyses the reaction 5-methyl-UTP + H2O = 5-methyl-UMP + diphosphate + H(+). The enzyme catalyses psi-UTP + H2O = psi-UMP + diphosphate + H(+). It carries out the reaction 5-methyl-CTP + H2O = 5-methyl-CMP + diphosphate + H(+). In terms of biological role, nucleoside triphosphate pyrophosphatase that hydrolyzes dTTP and UTP. Can also hydrolyze TTP and the modified nucleotides 5-methyl-UTP (m(5)UTP), pseudo-UTP and 5-methyl-CTP (m(5)CTP). Has weak activity with CTP. May have a dual role in cell division arrest and in preventing the incorporation of modified nucleotides into cellular nucleic acids. Important in maintenance of cell shape. This is dTTP/UTP pyrophosphatase (yhdE) from Escherichia coli (strain K12).